A 477-amino-acid chain; its full sequence is Glycogen synthase (477 aa).

Position 15 (Lys-15) interacts with ADP-alpha-D-glucose.

This sequence belongs to the glycosyltransferase 1 family. Bacterial/plant glycogen synthase subfamily.

The enzyme catalyses [(1-&gt;4)-alpha-D-glucosyl](n) + ADP-alpha-D-glucose = [(1-&gt;4)-alpha-D-glucosyl](n+1) + ADP + H(+). It participates in glycan biosynthesis; glycogen biosynthesis. Synthesizes alpha-1,4-glucan chains using ADP-glucose. This Streptococcus pneumoniae (strain 70585) protein is Glycogen synthase.